Here is a 406-residue protein sequence, read N- to C-terminus: Tryptophan synthase beta chain (406 aa).

Lys-99 is subject to N6-(pyridoxal phosphate)lysine.

Belongs to the TrpB family. Tetramer of two alpha and two beta chains. The cofactor is pyridoxal 5'-phosphate.

It catalyses the reaction (1S,2R)-1-C-(indol-3-yl)glycerol 3-phosphate + L-serine = D-glyceraldehyde 3-phosphate + L-tryptophan + H2O. The protein operates within amino-acid biosynthesis; L-tryptophan biosynthesis; L-tryptophan from chorismate: step 5/5. Functionally, the beta subunit is responsible for the synthesis of L-tryptophan from indole and L-serine. This chain is Tryptophan synthase beta chain, found in Rhizobium johnstonii (strain DSM 114642 / LMG 32736 / 3841) (Rhizobium leguminosarum bv. viciae).